A 376-amino-acid polypeptide reads, in one-letter code: Protein-glutamate methylesterase/protein-glutamine glutaminase 1 (376 aa).

The 118-residue stretch at 4 to 121 (KVLVVDDSSF…ARNRDEAVSL (118 aa)) folds into the Response regulatory domain. Aspartate 55 is modified (4-aspartylphosphate). The disordered stretch occupies residues 138–174 (RPVASSTPVQERPQSTLNRPTTGLRREAPAQAPVSRA). Polar residues predominate over residues 141–158 (ASSTPVQERPQSTLNRPT). The CheB-type methylesterase domain maps to 183–376 (SGKKYQLTAI…ERMLVEVGLA (194 aa)). Catalysis depends on residues serine 195, histidine 222, and aspartate 318.

The protein belongs to the CheB family. Post-translationally, phosphorylated by CheA. Phosphorylation of the N-terminal regulatory domain activates the methylesterase activity.

The protein localises to the cytoplasm. It catalyses the reaction [protein]-L-glutamate 5-O-methyl ester + H2O = L-glutamyl-[protein] + methanol + H(+). The enzyme catalyses L-glutaminyl-[protein] + H2O = L-glutamyl-[protein] + NH4(+). In terms of biological role, involved in chemotaxis. Part of a chemotaxis signal transduction system that modulates chemotaxis in response to various stimuli. Catalyzes the demethylation of specific methylglutamate residues introduced into the chemoreceptors (methyl-accepting chemotaxis proteins or MCP) by CheR. Also mediates the irreversible deamidation of specific glutamine residues to glutamic acid. The polypeptide is Protein-glutamate methylesterase/protein-glutamine glutaminase 1 (Vibrio vulnificus (strain CMCP6)).